The following is a 338-amino-acid chain: tRNA N6-adenosine threonylcarbamoyltransferase (338 aa).

The Fe cation site is built by His-111 and His-115. Residues 134 to 138 (LLSGG), Asp-167, Gly-180, and Asn-275 each bind substrate. Asp-304 contacts Fe cation.

It belongs to the KAE1 / TsaD family. Fe(2+) is required as a cofactor.

The protein resides in the cytoplasm. It carries out the reaction L-threonylcarbamoyladenylate + adenosine(37) in tRNA = N(6)-L-threonylcarbamoyladenosine(37) in tRNA + AMP + H(+). Its function is as follows. Required for the formation of a threonylcarbamoyl group on adenosine at position 37 (t(6)A37) in tRNAs that read codons beginning with adenine. Is involved in the transfer of the threonylcarbamoyl moiety of threonylcarbamoyl-AMP (TC-AMP) to the N6 group of A37, together with TsaE and TsaB. TsaD likely plays a direct catalytic role in this reaction. In Leptospira interrogans serogroup Icterohaemorrhagiae serovar copenhageni (strain Fiocruz L1-130), this protein is tRNA N6-adenosine threonylcarbamoyltransferase.